The sequence spans 486 residues: ATP synthase subunit beta, chloroplastic (486 aa).

154–161 lines the ATP pocket; sequence GGAGVGKT.

The protein belongs to the ATPase alpha/beta chains family. In terms of assembly, F-type ATPases have 2 components, CF(1) - the catalytic core - and CF(0) - the membrane proton channel. CF(1) has five subunits: alpha(3), beta(3), gamma(1), delta(1), epsilon(1). CF(0) has four main subunits: a(1), b(1), b'(1) and c(9-12).

It is found in the plastid. It localises to the chloroplast thylakoid membrane. The enzyme catalyses ATP + H2O + 4 H(+)(in) = ADP + phosphate + 5 H(+)(out). Produces ATP from ADP in the presence of a proton gradient across the membrane. The catalytic sites are hosted primarily by the beta subunits. This Dennstaedtia punctilobula (Hay-scented fern) protein is ATP synthase subunit beta, chloroplastic.